Consider the following 424-residue polypeptide: Isoflavipucine cluster transcription factor ATEG_00326 (424 aa).

Residues 10–38 (CDRCHGQKLRCIHSGGGPCVRCAKAKATC) constitute a DNA-binding region (zn(2)-C6 fungal-type). Residues 265-286 (ARMQTPEGTPERTSESSPSGPP) form a disordered region.

It localises to the nucleus. Its function is as follows. Transcription factor that regulates the expression of the gene cluster that mediates the biosynthesis of isoflavipucine. The sequence is that of Isoflavipucine cluster transcription factor ATEG_00326 from Aspergillus terreus (strain NIH 2624 / FGSC A1156).